A 489-amino-acid chain; its full sequence is MSRYGNAPPPYEEVVSVATPSYVQQPWVPPRYFAPTEGRNSIVYDQFPTCYDTTKLFLVDNKSADITDLNMQNDHSHFATTVVQNSEFTPREASTQHITLDNRSRWGAKLKTLIQTNLPSVTDYMYTNSLRVKLMESYDEATGTATYEWHDITLPEGNFDSGRIIDLLNNAIWELYLTYGRQNGVREDQIGIKFDTRNFRLGFDPLTNLIMPGHYTYEYFHPDIVLMKGCAVDFSKTRLNNVLGWRKRYPYQPGFVITYDDLVGGDIPPLLDLAAYLKKPREGAGGPIIRALQKDSKGRSYHVQYTDLGEVTGYRSLYLAYNYTSDVTHLRKSTVRSWLVLTAPDITGGAQQLYWSLPDMALAPTTFRPSGQTPATFPVVSTEPLPIAARTIFNAQPGYAQIVNQNTSQTMVYNRFPENAILMRPPQPFMVQVPENVTTVTDHGTLPLQNTLSGVQRVAVTDSRRRTCPYVYKCAATLEPHIMSSRTLQ.

The protein belongs to the adenoviridae penton family. In terms of assembly, interacts with the fiber protein (via N-terminal tail region). Interacts with the capsid vertex protein; this interaction binds the penton base to neighboring peripentonal hexons.

The protein resides in the virion. It is found in the host nucleus. Functionally, major capsid protein that self-associates to form penton base pentamers, each in the shape of a pentagon, situated at the 12 vertices of the pseudo T=25 capsid. Involved in virus secondary attachment to host cell after initial attachment by the fiber protein, and in endocytosis of virions. As the virus enters the host cell, penton proteins are shed concomitant with virion acidification in the endosome. The sequence is that of Penton protein from Murine adenovirus A serotype 1 (MAdV-1).